The chain runs to 311 residues: Pantothenate kinase (311 aa).

93-100 is a binding site for ATP; sequence GSVAVGKS.

The protein belongs to the prokaryotic pantothenate kinase family.

It localises to the cytoplasm. The catalysed reaction is (R)-pantothenate + ATP = (R)-4'-phosphopantothenate + ADP + H(+). Its pathway is cofactor biosynthesis; coenzyme A biosynthesis; CoA from (R)-pantothenate: step 1/5. The sequence is that of Pantothenate kinase (coaA) from Haemophilus influenzae (strain ATCC 51907 / DSM 11121 / KW20 / Rd).